Consider the following 34-residue polypeptide: MSDIN-like toxin proprotein 3 (34 aa).

The propeptide occupies 1–10 (MSDINTARLP). The segment at residues 11–20 (FFQPPEFRPP) is a cross-link (cyclopeptide (Phe-Pro)). Residues 21–34 (CVGDDIEMVLTRGE) constitute a propeptide that is removed on maturation.

The protein belongs to the MSDIN fungal toxin family. Processed by the macrocyclase-peptidase enzyme POPB to yield a toxic cyclic decapeptide. POPB first removes 10 residues from the N-terminus. Conformational trapping of the remaining peptide forces the enzyme to release this intermediate rather than proceed to macrocyclization. The enzyme rebinds the remaining peptide in a different conformation and catalyzes macrocyclization of the N-terminal 10 residues.

Functionally, probable toxin that belongs to the MSDIN-like toxin family responsible for a large number of food poisoning cases and deaths. This Amanita bisporigera (Destroying angel) protein is MSDIN-like toxin proprotein 3.